Consider the following 300-residue polypeptide: Bifunctional protein FolD 1 (300 aa).

NADP(+) contacts are provided by residues 166 to 168 (GRS), S191, and I232.

The protein belongs to the tetrahydrofolate dehydrogenase/cyclohydrolase family. Homodimer.

The enzyme catalyses (6R)-5,10-methylene-5,6,7,8-tetrahydrofolate + NADP(+) = (6R)-5,10-methenyltetrahydrofolate + NADPH. The catalysed reaction is (6R)-5,10-methenyltetrahydrofolate + H2O = (6R)-10-formyltetrahydrofolate + H(+). It participates in one-carbon metabolism; tetrahydrofolate interconversion. Its function is as follows. Catalyzes the oxidation of 5,10-methylenetetrahydrofolate to 5,10-methenyltetrahydrofolate and then the hydrolysis of 5,10-methenyltetrahydrofolate to 10-formyltetrahydrofolate. In Roseobacter denitrificans (strain ATCC 33942 / OCh 114) (Erythrobacter sp. (strain OCh 114)), this protein is Bifunctional protein FolD 1.